A 94-amino-acid polypeptide reads, in one-letter code: Large ribosomal subunit protein uL23 (94 aa).

It belongs to the universal ribosomal protein uL23 family. In terms of assembly, part of the 50S ribosomal subunit. Contacts protein L29, and trigger factor when it is bound to the ribosome.

One of the early assembly proteins it binds 23S rRNA. One of the proteins that surrounds the polypeptide exit tunnel on the outside of the ribosome. Forms the main docking site for trigger factor binding to the ribosome. This Lysinibacillus sphaericus (strain C3-41) protein is Large ribosomal subunit protein uL23.